Here is an 887-residue protein sequence, read N- to C-terminus: Replication origin-binding protein (887 aa).

Positions 1–28 (MPSIGPIPTIPDEGSRGSSATAAPRRAM) are disordered. In terms of domain architecture, Helicase ATP-binding spans 93–258 (PNNPSSRRVT…ASARGERSVH (166 aa)). 106 to 113 (APMGSGKT) lines the ATP pocket.

Belongs to the herpesviridae OriBP family. As to quaternary structure, homodimer. Interacts with the major DNA-binding protein. Interacts with the DNA helicase/primase complex-associated protein and the polymerase accessory protein.

It localises to the host nucleus. Functionally, functions as a docking protein to recruit essential components of the viral replication machinery to viral DNA origins. In the presence of the major DNA-binding protein, opens dsDNA leading to a conformational change in the origin that facilitates DNA unwinding and subsequent replication. This chain is Replication origin-binding protein, found in Equus caballus (Horse).